Here is a 453-residue protein sequence, read N- to C-terminus: Glutamyl-tRNA reductase (453 aa).

Residues 49-52, Ser109, 114-116, and Gln120 each bind substrate; these read TCNR and EQQ. Cys50 serves as the catalytic Nucleophile. 191 to 196 lines the NADP(+) pocket; the sequence is GAGSMG. The tract at residues 432–453 is disordered; the sequence is PAAVATPTDLVDGDRTGRDLQA. Basic and acidic residues predominate over residues 443–453; the sequence is DGDRTGRDLQA.

Belongs to the glutamyl-tRNA reductase family. Homodimer.

The enzyme catalyses (S)-4-amino-5-oxopentanoate + tRNA(Glu) + NADP(+) = L-glutamyl-tRNA(Glu) + NADPH + H(+). The protein operates within porphyrin-containing compound metabolism; protoporphyrin-IX biosynthesis; 5-aminolevulinate from L-glutamyl-tRNA(Glu): step 1/2. Functionally, catalyzes the NADPH-dependent reduction of glutamyl-tRNA(Glu) to glutamate 1-semialdehyde (GSA). The protein is Glutamyl-tRNA reductase of Rhodococcus erythropolis (strain PR4 / NBRC 100887).